A 376-amino-acid chain; its full sequence is Succinyl-diaminopimelate desuccinylase (376 aa).

Residue His66 coordinates Zn(2+). Residue Asp68 is part of the active site. Asp99 provides a ligand contact to Zn(2+). Glu133 functions as the Proton acceptor in the catalytic mechanism. Positions 134, 162, and 348 each coordinate Zn(2+).

This sequence belongs to the peptidase M20A family. DapE subfamily. Homodimer. It depends on Zn(2+) as a cofactor. Requires Co(2+) as cofactor.

The enzyme catalyses N-succinyl-(2S,6S)-2,6-diaminopimelate + H2O = (2S,6S)-2,6-diaminopimelate + succinate. The protein operates within amino-acid biosynthesis; L-lysine biosynthesis via DAP pathway; LL-2,6-diaminopimelate from (S)-tetrahydrodipicolinate (succinylase route): step 3/3. Functionally, catalyzes the hydrolysis of N-succinyl-L,L-diaminopimelic acid (SDAP), forming succinate and LL-2,6-diaminopimelate (DAP), an intermediate involved in the bacterial biosynthesis of lysine and meso-diaminopimelic acid, an essential component of bacterial cell walls. This Xanthomonas euvesicatoria pv. vesicatoria (strain 85-10) (Xanthomonas campestris pv. vesicatoria) protein is Succinyl-diaminopimelate desuccinylase.